The chain runs to 462 residues: Transcription factor Sox-8 (462 aa).

Residues 1 to 12 (MLKMTEEHDKCV) show a composition bias toward basic and acidic residues. Disordered stretches follow at residues 1 to 57 (MLKM…RKVD), 155 to 243 (RLRI…QDLK), and 291 to 375 (GHTS…GSYS). A compositionally biased stretch (polar residues) spans 15 to 50 (QPCSPSGTNSSMSQDESDSDAPSSPTGSDGQGSLLT). The HMG box DNA-binding region spans 100–168 (VKRPMNAFMV…QHKKDHPDYK (69 aa)). Composition is skewed to basic and acidic residues over residues 155 to 169 (RLRIQHKKDHPDYKY), 209 to 218 (DAHHHAEHAG), and 232 to 243 (TDLHHGAKQDLK). The short motif at 415 to 423 (SSLYQYPYF) is the 9aaTAD element. The segment at 442–462 (PAHSPTGSGWDQPVYTTLSRP) is disordered. The span at 446-462 (PTGSGWDQPVYTTLSRP) shows a compositional bias: polar residues.

The protein resides in the nucleus. In terms of biological role, may play a role in central nervous system, limb and facial development. May be involved in male sex determination. Binds the consensus motif 5'-[AT][AT]CAA[AT]G-3'. This Tetraodon nigroviridis (Spotted green pufferfish) protein is Transcription factor Sox-8 (sox8).